Reading from the N-terminus, the 387-residue chain is Lipid-A-disaccharide synthase (387 aa).

It belongs to the LpxB family.

It catalyses the reaction a lipid X + a UDP-2-N,3-O-bis[(3R)-3-hydroxyacyl]-alpha-D-glucosamine = a lipid A disaccharide + UDP + H(+). It functions in the pathway bacterial outer membrane biogenesis; LPS lipid A biosynthesis. In terms of biological role, condensation of UDP-2,3-diacylglucosamine and 2,3-diacylglucosamine-1-phosphate to form lipid A disaccharide, a precursor of lipid A, a phosphorylated glycolipid that anchors the lipopolysaccharide to the outer membrane of the cell. This chain is Lipid-A-disaccharide synthase, found in Glaesserella parasuis serovar 5 (strain SH0165) (Haemophilus parasuis).